Reading from the N-terminus, the 667-residue chain is Leucine zipper putative tumor suppressor 2 (667 aa).

Positions Met-1 to Ala-25 are enriched in low complexity. Disordered stretches follow at residues Met-1–Gly-132, Pro-150–Leu-325, and Gln-516–Pro-541. The tract at residues Met-1 to Lys-333 is required for centrosomal localization. The span at Pro-172–Gln-181 shows a compositional bias: polar residues. Positions Ala-187–Ala-198 are enriched in low complexity. Over residues Pro-212 to Thr-232 the composition is skewed to polar residues. Low complexity predominate over residues Ser-241–Gly-282. Ser-248 carries the phosphoserine modification. The span at Ser-283–Gly-294 shows a compositional bias: gly residues. Residue Ser-295 is modified to Phosphoserine. Positions Ser-310 to Ser-321 are enriched in pro residues. Residues Val-329–Asp-647 adopt a coiled-coil conformation. The sufficient for interaction with CTNNB1 stretch occupies residues Ser-445–Ile-667. Residues Ile-448–Ile-667 are sufficient for interaction with KATNB1 and for inhibition of katanin-mediated microtubule severing. Positions Gln-516 to Gly-526 are enriched in basic and acidic residues. Phosphoserine is present on Ser-568. Residues Leu-629–Leu-638 carry the Nuclear export signal motif.

It belongs to the LZTS2 family. Interacts with KATNB1. Also interacts with CTNNB1, gamma-tubulin and KIF23.

Its subcellular location is the cytoplasm. It localises to the cytoskeleton. The protein localises to the microtubule organizing center. The protein resides in the centrosome. Its function is as follows. Negative regulator of katanin-mediated microtubule severing and release from the centrosome. Required for central spindle formation and the completion of cytokinesis. May negatively regulate axonal outgrowth by preventing the formation of microtubule bundles that are necessary for transport within the elongating axon. Negative regulator of the Wnt signaling pathway. Represses beta-catenin-mediated transcriptional activation by promoting the nuclear exclusion of beta-catenin. In Bos taurus (Bovine), this protein is Leucine zipper putative tumor suppressor 2.